The chain runs to 523 residues: Cilia- and flagella-associated protein 157 (523 aa).

The tract at residues 1-31 is disordered; it reads MAPKKKPNKGGKEMQGKKIGGKKDASGTKTP. Residues 10–26 are compositionally biased toward basic and acidic residues; it reads GGKEMQGKKIGGKKDAS. The residue at position 30 (Thr-30) is a Phosphothreonine. Coiled-coil stretches lie at residues 32 to 191, 248 to 274, and 302 to 371; these read ELAM…LEKK, VQLL…LENT, and GTEE…VLIQ. A disordered region spans residues 419-440; it reads QPDMGSHQDKQPQGLSKESQRI. Residues 429-440 are compositionally biased toward polar residues; sequence QPQGLSKESQRI.

The protein belongs to the CFAP157 family. Interacts with TUBB and TUBA4A. Interacts with CEP350. Specifically expressed in tissues containing motile cilia.

The protein resides in the cytoplasm. The protein localises to the cytoskeleton. It is found in the cilium basal body. Functionally, specifically required during spermatogenesis for flagellum morphogenesis and sperm motility. May be required to suppress the formation of supernumerary axonemes and ensure a correct ultrastructure. The polypeptide is Cilia- and flagella-associated protein 157 (Mus musculus (Mouse)).